The sequence spans 1260 residues: Neural cell adhesion molecule L1 (1260 aa).

The N-terminal stretch at 1–19 is a signal peptide; sequence MVVMLRYVWPLLLCSPCLL. At 20 to 1123 the chain is on the extracellular side; sequence IQIPDEYKGH…VSTTGSFASE (1104 aa). Ig-like C2-type domains are found at residues 35 to 130, 138 to 225, 239 to 327, 332 to 419, 424 to 506, and 517 to 600; these read PVIT…IQLV, PKET…EPID, PRLL…YYVT, PYWL…AYIY, PARI…NNVT, and TQIT…DEVE. Disulfide bonds link Cys57-Cys113 and Cys157-Cys208. Residues Asn100, Asn202, Asn246, and Asn293 are each glycosylated (N-linked (GlcNAc...) asparagine). Intrachain disulfides connect Cys263–Cys311 and Cys353–Cys403. Asn432, Asn478, Asn489, and Asn504 each carry an N-linked (GlcNAc...) asparagine glycan. Cys447 and Cys496 are oxidised to a cystine. Cys538 and Cys590 are disulfide-bonded. 2 consecutive short sequence motifs (cell attachment site) follow at residues 553 to 555 and 562 to 564; these read RGD. Residues Asn587 and Asn670 are each glycosylated (N-linked (GlcNAc...) asparagine). Fibronectin type-III domains follow at residues 613 to 711, 716 to 809, 811 to 916, 919 to 1015, and 1014 to 1112; these read PVPH…TPEA, NPVD…SGED, PQVS…PEGV, HPEA…MALF, and LFGK…TGPV. The tract at residues 697 to 724 is disordered; sequence GEPSPVSESVVTPEAAPEKNPVDVRGEG. A compositionally biased stretch (basic and acidic residues) spans 712-724; it reads APEKNPVDVRGEG. 11 N-linked (GlcNAc...) asparagine glycosylation sites follow: Asn725, Asn776, Asn824, Asn848, Asn875, Asn968, Asn978, Asn1022, Asn1030, Asn1073, and Asn1107. Residues 1124-1146 form a helical membrane-spanning segment; that stretch reads GWFIAFVSAIILLLLILLILCFI. Over 1147–1260 the chain is Cytoplasmic; sequence KRSKGGKYSV…SPINPAVALE (114 aa). Phosphoserine is present on residues Ser1166, Ser1181, Ser1184, Ser1197, Ser1246, Ser1247, and Ser1251. Disordered stretches follow at residues 1183–1210 and 1229–1260; these read ESDN…SDDS and IGQY…VALE. The segment covering 1244 to 1253 has biased composition (polar residues); sequence NDSSGATSPI.

Belongs to the immunoglobulin superfamily. L1/neurofascin/NgCAM family. Interacts with SHTN1; the interaction occurs in axonal growth cones. Interacts with isoform 2 of BSG. Expressed in the brain, including in the molecular layer of the cerebellar cortex, the fiber-rich layers of the hippocampus (alveus, and strata lacunosum moleculare, radiatum, and oriens), the nerve fiber layer and the inner and outer plexiform layers of the retina, and in the molecular layer of the olfactory bulb (at protein level).

The protein resides in the cell membrane. It is found in the cell projection. The protein localises to the growth cone. In terms of biological role, neural cell adhesion molecule involved in the dynamics of cell adhesion and in the generation of transmembrane signals at tyrosine kinase receptors. During brain development, critical in multiple processes, including neuronal migration, axonal growth and fasciculation, and synaptogenesis. In the mature brain, plays a role in the dynamics of neuronal structure and function, including synaptic plasticity. This is Neural cell adhesion molecule L1 (L1cam) from Mus musculus (Mouse).